Reading from the N-terminus, the 181-residue chain is RNA pyrophosphohydrolase (181 aa).

The Nudix hydrolase domain occupies Gly6 to Lys150. Residues Gly38 to Gly59 carry the Nudix box motif.

It belongs to the Nudix hydrolase family. RppH subfamily. Requires a divalent metal cation as cofactor.

Accelerates the degradation of transcripts by removing pyrophosphate from the 5'-end of triphosphorylated RNA, leading to a more labile monophosphorylated state that can stimulate subsequent ribonuclease cleavage. The chain is RNA pyrophosphohydrolase from Psychromonas ingrahamii (strain DSM 17664 / CCUG 51855 / 37).